The following is a 225-amino-acid chain: LHFPL tetraspan subfamily member 2a protein (225 aa).

4 helical membrane-spanning segments follow: residues 11 to 31 (MLWT…FLST), 99 to 119 (IFLA…IFTM), 129 to 149 (IFNV…VGLV), and 178 to 198 (AGWA…CAVF).

Belongs to the LHFP family.

It is found in the membrane. Functionally, plays a role in fertility. Involved in distal reproductive tract development. The chain is LHFPL tetraspan subfamily member 2a protein from Danio rerio (Zebrafish).